The sequence spans 387 residues: Patatin group D-2 (387 aa).

An N-terminal signal peptide occupies residues 1–23 (MATTKSFLILIVMILATTSSTFA). The region spanning 32-230 (LSIDGGGIKG…TVADPALLSI (199 aa)) is the PNPLA domain. The short motif at 36–41 (GGGIKG) is the GXGXXG element. Positions 75–79 (GTSTG) match the GXSXG motif. The active-site Nucleophile is Ser77. Asn115 carries an N-linked (GlcNAc...) asparagine glycan. The Proton acceptor role is filled by Asp216. The short motif at 216 to 218 (DGA) is the DGA/G element. Residues 361 to 385 (ETYEEALKRFAKLLSDRKKLRANKA) are a coiled coil.

The protein belongs to the patatin family. In terms of tissue distribution, tuber.

It is found in the vacuole. Its function is as follows. Probable lipolytic acyl hydrolase (LAH), an activity which is thought to be involved in the response of tubers to pathogens. This Solanum tuberosum (Potato) protein is Patatin group D-2.